Here is a 1069-residue protein sequence, read N- to C-terminus: ISWI chromatin-remodeling complex ATPase CHR17 (1069 aa).

A compositionally biased stretch (basic and acidic residues) spans M1–S10. Disordered regions lie at residues M1–Q93 and F136–L168. Acidic residues-rich tracts occupy residues Y15–E37 and S45–K78. Residues A79–Q93 show a composition bias toward basic and acidic residues. Over residues K146–S156 the composition is skewed to basic residues. In terms of domain architecture, Helicase ATP-binding spans I206–E371. D219–T226 contacts ATP. Residues D322–H325 carry the DEAH box motif. Positions L499–A650 constitute a Helicase C-terminal domain. SANT domains are found at residues E845 to K897 and Q946 to I1007. The interval E1016 to K1069 is disordered. The segment covering K1032–S1051 has biased composition (polar residues). The segment covering L1059–K1069 has biased composition (basic and acidic residues).

The protein belongs to the SNF2/RAD54 helicase family. ISWI subfamily. In terms of assembly, interacts with RLT1. Binds to FGT1. Highly expressed in growing tissues such as inflorescence and flower meristems, young leaves and floral organs. Expressed in roots, rosette and cauline leaves, stems, flowers, inflorescences and siliques.

The protein localises to the nucleus. In terms of biological role, possesses intrinsic ATP-dependent nucleosome-remodeling activity. Constitutes the catalytic subunit of several complexes capable of forming ordered nucleosome arrays on chromatin. Involved in the formation of nucleosome distribution patterns. Required for the maintenance of the plant vegetative phase. In association with RLT1 or RLT2 may prevent the early activation of the vegetative-to-reproductive transition by regulating key genes that contribute to flower timing, such as FT, SEP1, SEP3, AGL8/FUL, SOC1 and FLC. Necessary to acquire heat stress (HS) memory. The protein is ISWI chromatin-remodeling complex ATPase CHR17 of Arabidopsis thaliana (Mouse-ear cress).